The sequence spans 365 residues: Poly(rC)-binding protein 2 (365 aa).

KH domains follow at residues 13 to 75 (TLTI…FAMI) and 97 to 162 (PVTL…VKQI). Lysine 115 participates in a covalent cross-link: Glycyl lysine isopeptide (Lys-Gly) (interchain with G-Cter in SUMO2). Serine 173 is subject to Phosphoserine. Lysine 185 is covalently cross-linked (Glycyl lysine isopeptide (Lys-Gly) (interchain with G-Cter in SUMO2)). A phosphoserine mark is found at serine 189 and serine 272. In terms of domain architecture, KH 3 spans 287 to 351 (TTSHELTIPN…ASISLAQYLI (65 aa)). Lysine 322 is covalently cross-linked (Glycyl lysine isopeptide (Lys-Gly) (interchain with G-Cter in SUMO2)). Serine 364 and serine 365 each carry phosphoserine.

As to quaternary structure, identified in a mRNP complex, at least composed of DHX9, DDX3X, ELAVL1, HNRNPU, IGF2BP1, ILF3, PABPC1, PCBP2, PTBP2, STAU1, STAU2, SYNCRIP and YBX1. Interacts with IFIH1 and RNF135. Interacts with MAVS (via C-terminus) and ITCH (via WW domains). Interacts with CGAS; preventing the formation of liquid-like droplets in which CGAS is activated. Phosphorylated. The non-phosphorylated form(s) exhibited the strongest poly(rC)-binding activity. In terms of processing, (Microbial infection) Proteolytically cleaved by picornavirus proteinase 3CD. As to expression, detected in all tissues examined.

Its subcellular location is the nucleus. It is found in the cytoplasm. In terms of biological role, single-stranded nucleic acid binding protein that binds preferentially to oligo dC. Major cellular poly(rC)-binding protein. Also binds poly(rU). Acts as a negative regulator of antiviral signaling. Negatively regulates cellular antiviral responses mediated by MAVS signaling. It acts as an adapter between MAVS and the E3 ubiquitin ligase ITCH, therefore triggering MAVS ubiquitination and degradation. Negativeley regulates the cGAS-STING pathway via interaction with CGAS, preventing the formation of liquid-like droplets in which CGAS is activated. Together with PCBP1, required for erythropoiesis, possibly by regulating mRNA splicing. (Microbial infection) In case of infection by poliovirus, binds to the viral internal ribosome entry site (IRES) and stimulates the IRES-mediated translation. Also plays a role in initiation of viral RNA replication in concert with the viral protein 3CD. This is Poly(rC)-binding protein 2 from Homo sapiens (Human).